An 83-amino-acid polypeptide reads, in one-letter code: Bowman-Birk type proteinase inhibitor (83 aa).

7 disulfide bridges follow: cysteine 18/cysteine 72, cysteine 19/cysteine 34, cysteine 22/cysteine 68, cysteine 24/cysteine 32, cysteine 42/cysteine 49, cysteine 46/cysteine 61, and cysteine 51/cysteine 59.

Belongs to the Bowman-Birk serine protease inhibitor family.

This Phaseolus lunatus (Lima bean) protein is Bowman-Birk type proteinase inhibitor.